Here is a 128-residue protein sequence, read N- to C-terminus: Probable 4-amino-4-deoxy-L-arabinose-phosphoundecaprenol flippase subunit ArnF (128 aa).

The Cytoplasmic portion of the chain corresponds to 1–2; the sequence is MG. The chain crosses the membrane as a helical span at residues 3–23; the sequence is LMWGLFSVIIASAAQLSMGFA. At 24–35 the chain is on the periplasmic side; sequence ASHLPPMTHLWD. A helical transmembrane segment spans residues 36–56; that stretch reads FIAALLAFGLDARILLLGLLG. Residues 57–76 are Cytoplasmic-facing; that stretch reads YLLSVFCWYKTLHKLALSKA. A helical membrane pass occupies residues 77–97; it reads YALLSMSYVLVWIASMVLPGW. The Periplasmic portion of the chain corresponds to 98-100; sequence EGT. The helical transmembrane segment at 101 to 121 threads the bilayer; that stretch reads FSLKALLGVACIMSGLMLIFL. Residues 122 to 128 are Cytoplasmic-facing; sequence PTTKQRY.

This sequence belongs to the ArnF family. As to quaternary structure, heterodimer of ArnE and ArnF.

It is found in the cell inner membrane. It functions in the pathway bacterial outer membrane biogenesis; lipopolysaccharide biosynthesis. Its function is as follows. Translocates 4-amino-4-deoxy-L-arabinose-phosphoundecaprenol (alpha-L-Ara4N-phosphoundecaprenol) from the cytoplasmic to the periplasmic side of the inner membrane. In Escherichia coli O45:K1 (strain S88 / ExPEC), this protein is Probable 4-amino-4-deoxy-L-arabinose-phosphoundecaprenol flippase subunit ArnF.